The sequence spans 542 residues: N-substituted formamide deformylase (542 aa).

A propeptide spanning residues 1–2 (MT) is cleaved from the precursor.

Homodimer. Requires Zn(2+) as cofactor.

The catalysed reaction is N-benzylformamide + H2O = benzylamine + formate. With respect to regulation, completely inhibited by HgCl(2), CuCl, CuCl(2) and AgNO(3). Partially inhibited by ZnCl(2) and SnCl(2). Almost completely inhibited by the reducing reagent DTT. Partially inhibited by phenylhydrazine. Moderately inhibited by phenanthroline and 8-hydroxyquinoline. Completely inhibited by the thiol-specific inhibitors N-ethylmaleimide and p-chloromercuribenzoate. Not inhibited by the carbonyl-specific inhibitors aminoguanidine and semicarbazide, the chelating agents alpha,alpha'-dipyridyl, KCN, diethyldithiocarbamate and EDTA, or the oxidizing reagents and serine-modifying reagents such as H(2)O(2), ammonium persulfate, phenylmethanesulfonyl fluoride and diisopropyl fluorophosphates. Its function is as follows. Hydrolyzes N-substituted formamides, but not amides. N-benzylformamide is the preferred substrate, while N-butylformamide is hydrolyzed at a much lower rate. Has very low activity towards allylformamide, N-(2-cyclohex-1-enylethyl)formamide and N-(alpha-methylbenzyl)formamide. The protein is N-substituted formamide deformylase of Arthrobacter pascens.